We begin with the raw amino-acid sequence, 195 residues long: uncharacterized protein (195 aa).

This is an uncharacterized protein from Acidianus hospitalis (AFV-1).